Here is a 447-residue protein sequence, read N- to C-terminus: MGKEKTHINIVVIGHVDSGKSTTTGHLIYKLGGIDKRVIERFEKEAAEMNKRSFKYAWVLDKLKAERERGITIDIALWKFETTKYYCTVIDAPGHRDFIKNMITGTSQADCAVLIIDSTTGGFEAGISKDGQTREHALLAFTLGVKQMICCCNKMDATTPKYSKARYDEIVKEVSSYLKKVGYNPDKIPFVPISGFEGDNMIERSTNLDWYKGPTLLEALDQINEPKRPSDKPLRLPLQDVYKIGGIGTVPVGRVETGVLKPGMVVTFGPSGLTTEVKSVEMHHEALQEALPGDNVGFNVKNVAVKDLKRGYVASNSKDDPAKEAASFTSQVIIMNHPGQIGNGYAPVLDCHTSHIAVKFAELVTKIDRRSGKELEKEPKFLKNGDAGMVKMIPTKPMVVETFSEYPPLGRFAVRDMRQTVAVGVIKNVEKKDPTGAKVTKAAAKKK.

In terms of domain architecture, tr-type G spans 5–230; the sequence is KTHINIVVIG…DQINEPKRPS (226 aa). The segment at 14 to 21 is G1; the sequence is GHVDSGKS. Residue 14 to 21 participates in GTP binding; the sequence is GHVDSGKS. Lys55 bears the N6,N6-dimethyllysine mark. Residues 70–74 form a G2 region; it reads GITID. Lys79 carries the N6,N6,N6-trimethyllysine modification. Positions 91-94 are G3; it reads DAPG. Residues 91–95 and 153–156 each bind GTP; these read DAPGH and NKMD. Residues 153 to 156 are G4; it reads NKMD. An N6,N6,N6-trimethyllysine modification is found at Lys187. Residues 194–196 are G5; it reads SGF. Lys261 is modified (N6-methyllysine). 5-glutamyl glycerylphosphorylethanolamine is present on Glu289. N6,N6,N6-trimethyllysine is present on Lys306. A 5-glutamyl glycerylphosphorylethanolamine modification is found at Glu362. At Lys396 the chain carries N6,N6,N6-trimethyllysine.

This sequence belongs to the TRAFAC class translation factor GTPase superfamily. Classic translation factor GTPase family. EF-Tu/EF-1A subfamily.

It localises to the cytoplasm. This protein promotes the GTP-dependent binding of aminoacyl-tRNA to the A-site of ribosomes during protein biosynthesis. The protein is Elongation factor 1-alpha (REFA1) of Oryza sativa subsp. japonica (Rice).